Here is a 315-residue protein sequence, read N- to C-terminus: Small ribosomal subunit biogenesis GTPase RsgA (315 aa).

A CP-type G domain is found at 80–241; sequence LSKQTHIIAS…IIDTPGIKGF (162 aa). Residues 129 to 132 and 183 to 191 each bind GTP; these read NKVD and GHSGTGKST. The Zn(2+) site is built by C265, C270, H272, and C278.

Belongs to the TRAFAC class YlqF/YawG GTPase family. RsgA subfamily. Monomer. Associates with 30S ribosomal subunit, binds 16S rRNA. Zn(2+) serves as cofactor.

Its subcellular location is the cytoplasm. Its function is as follows. One of several proteins that assist in the late maturation steps of the functional core of the 30S ribosomal subunit. Helps release RbfA from mature subunits. May play a role in the assembly of ribosomal proteins into the subunit. Circularly permuted GTPase that catalyzes slow GTP hydrolysis, GTPase activity is stimulated by the 30S ribosomal subunit. This is Small ribosomal subunit biogenesis GTPase RsgA from Christiangramia forsetii (strain DSM 17595 / CGMCC 1.15422 / KT0803) (Gramella forsetii).